We begin with the raw amino-acid sequence, 463 residues long: MNRGKLPEGWATAPVSTVTTLIRGVTYKKEQALNYLQDDYLPIIRANNIQNGKFDTTDLVFVPKNLVKESQKISPEDIVIAMSSGSKSVVGKSAHQRLPFECSFGAFCGALRPEKFISPNYIAHFTKSSFYRNKISSLSAGANINNIKPASFDLINIPIPSLAEQKIIAEKLDTLLAQVDSTKARLEQIPQILKRFRQAVLAAAVSGTLTTALRNSHSLIGWHSTNLGALIVDSCNGLAKRQGLNGNEITILRLADFKDAQRIIGNERKIKLDSKEENKYSLENDDILVIRVNGSADLAGRFIEYKSNGDIEGFCDHFIRLRLDSNKIMSRFLTYIANEGEGRFYLRNSLSTSAGQNTINQTSIKGLSFLLPPLKEQAEIVRRVEQLFAYADTIEKQVNNALTRVNSLTQSILAKAFRGELTAQWRAENPDLISGKNSAAALLEKIKAERAVSGGKKTSRKKA.

This sequence belongs to the type-I restriction system S methylase family. In terms of assembly, the type I restriction/modification system is composed of three polypeptides R, M and S; the restriction enzyme has stoichiometry R(2)M(2)S(1) while the methyltransferase is M(2)S(1).

Its function is as follows. The specificity (S) subunit of a type I restriction enzyme; this subunit dictates DNA sequence specificity. The M and S subunits together form a methyltransferase (MTase) that methylates A-2 on the top strand and A-3 on the bottom strand of the sequence 5'-AACN(6)GTRC-3'. In the presence of the R subunit the complex can also act as an endonuclease, binding to the same target sequence but cutting the DNA some distance from this site. Whether the DNA is cut or modified depends on the methylation state of the target sequence. When the target site is unmodified, the DNA is cut. When the target site is hemimethylated, the complex acts as a maintenance MTase modifying the DNA so that both strands become methylated. After locating a non-methylated recognition site, the enzyme complex serves as a molecular motor that translocates DNA in an ATP-dependent manner until a collision occurs that triggers cleavage. The polypeptide is Type I restriction enzyme StySPI specificity subunit (Salmonella potsdam).